Reading from the N-terminus, the 314-residue chain is Fibrinogen-like protein 1 (314 aa).

An N-terminal signal peptide occupies residues 1–22; it reads MGEIRSFVLITVALILGKESWV. Residues 28-62 are a coiled coil; it reads CLQEQVRLRAQVRQLETRVKQQQVVIAQLLHEKEV. The Fibrinogen C-terminal domain occupies 76–308; the sequence is LGGKRHYADC…SVVMKIRPSD (233 aa). Disulfide bonds link Cys85–Cys114 and Cys250–Cys263.

As to quaternary structure, homodimer. Interacts (via the Fibrinogen C-terminal domain) with LAG3 (via Ig-like domains 1 and 2).

The protein resides in the secreted. Its function is as follows. Immune suppressive molecule that inhibits antigen-specific T-cell activation by acting as a major ligand of LAG3. Responsible for LAG3 T-cell inhibitory function. Binds LAG3 independently from MHC class II (MHC-II). Secreted by, and promotes growth of, hepatocytes. This chain is Fibrinogen-like protein 1, found in Rattus norvegicus (Rat).